The following is a 433-amino-acid chain: 3-phosphoshikimate 1-carboxyvinyltransferase (433 aa).

Positions 23, 24, and 28 each coordinate 3-phosphoshikimate. K23 lines the phosphoenolpyruvate pocket. Residues G95 and R123 each coordinate phosphoenolpyruvate. Positions 170, 171, 172, 198, 317, and 344 each coordinate 3-phosphoshikimate. Q172 is a binding site for phosphoenolpyruvate. Catalysis depends on D317, which acts as the Proton acceptor. Phosphoenolpyruvate is bound by residues R348, R391, and K416.

Belongs to the EPSP synthase family. In terms of assembly, monomer.

The protein resides in the cytoplasm. The enzyme catalyses 3-phosphoshikimate + phosphoenolpyruvate = 5-O-(1-carboxyvinyl)-3-phosphoshikimate + phosphate. Its pathway is metabolic intermediate biosynthesis; chorismate biosynthesis; chorismate from D-erythrose 4-phosphate and phosphoenolpyruvate: step 6/7. Functionally, catalyzes the transfer of the enolpyruvyl moiety of phosphoenolpyruvate (PEP) to the 5-hydroxyl of shikimate-3-phosphate (S3P) to produce enolpyruvyl shikimate-3-phosphate and inorganic phosphate. In Neisseria meningitidis serogroup B (strain ATCC BAA-335 / MC58), this protein is 3-phosphoshikimate 1-carboxyvinyltransferase.